Reading from the N-terminus, the 148-residue chain is Large ribosomal subunit protein bL9 (148 aa).

It belongs to the bacterial ribosomal protein bL9 family.

Functionally, binds to the 23S rRNA. The protein is Large ribosomal subunit protein bL9 of Pseudomonas putida (strain GB-1).